The following is a 290-amino-acid chain: Small ribosomal subunit biogenesis GTPase RsgA (290 aa).

Residues 62-213 (KNSLVRPPIV…IADTPGFSSL (152 aa)) form the CP-type G domain. Residues 111–114 (SKMD) and 156–164 (GQTGVGKST) contribute to the GTP site. Zn(2+) contacts are provided by C237, C242, H244, and C250.

Belongs to the TRAFAC class YlqF/YawG GTPase family. RsgA subfamily. As to quaternary structure, monomer. Associates with 30S ribosomal subunit, binds 16S rRNA. The cofactor is Zn(2+).

Its subcellular location is the cytoplasm. One of several proteins that assist in the late maturation steps of the functional core of the 30S ribosomal subunit. Helps release RbfA from mature subunits. May play a role in the assembly of ribosomal proteins into the subunit. Circularly permuted GTPase that catalyzes slow GTP hydrolysis, GTPase activity is stimulated by the 30S ribosomal subunit. This chain is Small ribosomal subunit biogenesis GTPase RsgA, found in Streptococcus pyogenes serotype M3 (strain ATCC BAA-595 / MGAS315).